We begin with the raw amino-acid sequence, 215 residues long: Ribosomal RNA small subunit methyltransferase G (215 aa).

S-adenosyl-L-methionine-binding positions include Gly78, Leu83, Ala128–Glu129, and Arg146.

The protein belongs to the methyltransferase superfamily. RNA methyltransferase RsmG family.

It localises to the cytoplasm. The enzyme catalyses guanosine(527) in 16S rRNA + S-adenosyl-L-methionine = N(7)-methylguanosine(527) in 16S rRNA + S-adenosyl-L-homocysteine. Functionally, specifically methylates the N7 position of guanine in position 527 of 16S rRNA. This is Ribosomal RNA small subunit methyltransferase G from Anaeromyxobacter dehalogenans (strain 2CP-C).